Consider the following 101-residue polypeptide: Small ribosomal subunit protein bS18c (101 aa).

Over residues 1–19 the composition is skewed to basic residues; sequence MDKSKRPFRKSKRSFRKRL. A disordered region spans residues 1–23; that stretch reads MDKSKRPFRKSKRSFRKRLPPIG.

This sequence belongs to the bacterial ribosomal protein bS18 family. In terms of assembly, part of the 30S ribosomal subunit.

It is found in the plastid. The protein resides in the chloroplast. The protein is Small ribosomal subunit protein bS18c of Chloranthus spicatus (Chulantree).